The chain runs to 134 residues: Agouti-related protein (134 aa).

The signal sequence occupies residues 1–20 (MLTAVLLSCALLLAMPPLQG). Positions 21–84 (AQMGPAPLEG…VLDPEGRKPR (64 aa)) are excised as a propeptide. Disulfide bonds link cysteine 89–cysteine 104, cysteine 96–cysteine 110, cysteine 103–cysteine 121, cysteine 107–cysteine 131, and cysteine 112–cysteine 119. The Agouti domain maps to 89–131 (CVRLHESCLGHQVPCCDPCATCYCRFFNAFCYCRKLGTTTNPC). Residues 113–115 (RFF) form an interaction with melanocortin receptors region.

As to quaternary structure, interacts with melanocortin receptors MC3R, MC4R and MC5R.

The protein resides in the secreted. It is found in the golgi apparatus lumen. Functionally, plays a role in weight homeostasis. Involved in the control of feeding behavior through the central melanocortin system. Acts as alpha melanocyte-stimulating hormone antagonist by inhibiting cAMP production mediated by stimulation of melanocortin receptors within the hypothalamus and adrenal gland. Has very low activity with MC5R. Is an inverse agonist for MC3R and MC4R being able to suppress their constitutive activity. It promotes MC3R and MC4R endocytosis in an arrestin-dependent manner. This chain is Agouti-related protein (AGRP), found in Bos taurus (Bovine).